Consider the following 361-residue polypeptide: Phospho-N-acetylmuramoyl-pentapeptide-transferase (361 aa).

The next 10 helical transmembrane spans lie at 27–47, 72–92, 94–114, 133–153, 169–189, 200–220, 240–260, 264–284, 289–309, and 338–358; these read GAMVTGALFVFLFGPWIIDHL, TPTMGGLMILSGLVVSTLLWA, LHNPYVWVVLMVTLGFGFVGF, LRLAVEGLIALFACLVIIWAG, FAINLGWFYLVFGAFIIVGAG, GLAIVPVMIAAASFGMIAYLV, LAVLCGAVLGAGLGFLWFNAP, IFMGDTGSLALGGMIGSIAVA, IVLAVIGGLFVFEALSVIVQV, and QIVIRFWIIAVMLALAGLSTL.

This sequence belongs to the glycosyltransferase 4 family. MraY subfamily. Mg(2+) is required as a cofactor.

Its subcellular location is the cell inner membrane. It carries out the reaction UDP-N-acetyl-alpha-D-muramoyl-L-alanyl-gamma-D-glutamyl-meso-2,6-diaminopimeloyl-D-alanyl-D-alanine + di-trans,octa-cis-undecaprenyl phosphate = di-trans,octa-cis-undecaprenyl diphospho-N-acetyl-alpha-D-muramoyl-L-alanyl-D-glutamyl-meso-2,6-diaminopimeloyl-D-alanyl-D-alanine + UMP. It participates in cell wall biogenesis; peptidoglycan biosynthesis. Its function is as follows. Catalyzes the initial step of the lipid cycle reactions in the biosynthesis of the cell wall peptidoglycan: transfers peptidoglycan precursor phospho-MurNAc-pentapeptide from UDP-MurNAc-pentapeptide onto the lipid carrier undecaprenyl phosphate, yielding undecaprenyl-pyrophosphoryl-MurNAc-pentapeptide, known as lipid I. This Afipia carboxidovorans (strain ATCC 49405 / DSM 1227 / KCTC 32145 / OM5) (Oligotropha carboxidovorans) protein is Phospho-N-acetylmuramoyl-pentapeptide-transferase.